Consider the following 265-residue polypeptide: Mlc titration factor A (265 aa).

Positions 111, 148, 152, and 211 each coordinate Zn(2+).

The protein belongs to the MtfA family. Interacts with Mlc. The cofactor is Zn(2+).

The protein localises to the cytoplasm. Its function is as follows. Involved in the modulation of the activity of the glucose-phosphotransferase system (glucose-PTS). Interacts with the transcriptional repressor Mlc, preventing its interaction with DNA and leading to the modulation of expression of genes regulated by Mlc, including ptsG, which encodes the PTS system glucose-specific EIICB component. Shows zinc-dependent metallopeptidase activity. This is Mlc titration factor A from Escherichia coli (strain UTI89 / UPEC).